The following is a 264-amino-acid chain: Apolipoprotein A-I (264 aa).

An N-terminal signal peptide occupies residues 1 to 18 (MKAVVLAVAVLFLTGSQA). 2 tandem repeats follow at residues 67-88 (LNLL…EQLG) and 89-110 (PVTR…QEMN). The segment at 67-264 (LNLLENWDTF…DEATQKLNTQ (198 aa)) is 10 X approximate tandem repeats. A Methionine sulfoxide modification is found at M109. The stretch at 111 to 121 (KDLEEVKQKVQ) is one 3; half-length repeat. Repeat copies occupy residues 122 to 143 (PYLD…PKVE), 144 to 165 (PLGA…KQLV), and 166 to 187 (PLGE…TKLA). The stretch at 188-207 (PYSDQMRDRLAERLTALRDN) is one 7; truncated repeat. Methionine sulfoxide is present on M193. Copy 8 of the repeat occupies 208 to 229 (PKLAEYHARATEHLKKLGEKTK). A 9; half-length repeat occupies 230 to 240 (PTLEDLRQGLM). At M240 the chain carries Methionine sulfoxide. Repeat 10 spans residues 241-264 (PWLESLKAKALSVLDEATQKLNTQ).

The protein belongs to the apolipoprotein A1/A4/E family. In terms of assembly, homodimer. Interacts with APOA1BP and CLU. Component of a sperm activating protein complex (SPAP), consisting of APOA1, an immunoglobulin heavy chain, an immunoglobulin light chain and albumin. Interacts with NDRG1. Interacts with SCGB3A2. Interacts with NAXE and YJEFN3. Glycosylated. Post-translationally, palmitoylated. In terms of processing, phosphorylation sites are present in the extracellular medium.

The protein localises to the secreted. Participates in the reverse transport of cholesterol from tissues to the liver for excretion by promoting cholesterol efflux from tissues and by acting as a cofactor for the lecithin cholesterol acyltransferase (LCAT). As part of the SPAP complex, activates spermatozoa motility. This chain is Apolipoprotein A-I (Apoa1), found in Nannospalax galili (Northern Israeli blind subterranean mole rat).